Consider the following 365-residue polypeptide: UDP-N-acetylglucosamine--N-acetylmuramyl-(pentapeptide) pyrophosphoryl-undecaprenol N-acetylglucosamine transferase (365 aa).

Residues 17–19, Asn-129, Arg-167, Ser-194, Ile-250, 269–274, and Gln-295 each bind UDP-N-acetyl-alpha-D-glucosamine; these read TGG and ALTVSE.

Belongs to the glycosyltransferase 28 family. MurG subfamily.

The protein resides in the cell inner membrane. The enzyme catalyses di-trans,octa-cis-undecaprenyl diphospho-N-acetyl-alpha-D-muramoyl-L-alanyl-D-glutamyl-meso-2,6-diaminopimeloyl-D-alanyl-D-alanine + UDP-N-acetyl-alpha-D-glucosamine = di-trans,octa-cis-undecaprenyl diphospho-[N-acetyl-alpha-D-glucosaminyl-(1-&gt;4)]-N-acetyl-alpha-D-muramoyl-L-alanyl-D-glutamyl-meso-2,6-diaminopimeloyl-D-alanyl-D-alanine + UDP + H(+). The protein operates within cell wall biogenesis; peptidoglycan biosynthesis. Functionally, cell wall formation. Catalyzes the transfer of a GlcNAc subunit on undecaprenyl-pyrophosphoryl-MurNAc-pentapeptide (lipid intermediate I) to form undecaprenyl-pyrophosphoryl-MurNAc-(pentapeptide)GlcNAc (lipid intermediate II). This is UDP-N-acetylglucosamine--N-acetylmuramyl-(pentapeptide) pyrophosphoryl-undecaprenol N-acetylglucosamine transferase from Shewanella pealeana (strain ATCC 700345 / ANG-SQ1).